An 805-amino-acid polypeptide reads, in one-letter code: Kinesin-like protein Klp10A (805 aa).

The interval 1–274 (MDMITVGQSV…FVPLLDGQAV (274 aa)) is globular. Disordered stretches follow at residues 68 to 94 (QHAA…SAIG) and 117 to 211 (IPNP…RRSH). The span at 80–94 (APMNLSRNPTQSAIG) shows a compositional bias: polar residues. Positions 123 to 136 (SSNSVNTNSNSNTT) are enriched in low complexity. Serine 157 is subject to Phosphoserine. The span at 158 to 179 (QAATGQQQTRIASAVPNNTLPN) shows a compositional bias: polar residues. Low complexity predominate over residues 180–200 (PSAAASAGPAAQGVATAATTQ). Residues 205–244 (ASTRRSHALKEVERLKENREKRRARQAEMKEEKVALMNQD) adopt a coiled-coil conformation. The region spanning 278-610 (QITVCVRKRP…LRYADRVKEL (333 aa)) is the Kinesin motor domain. Position 368–375 (368–375 (GQTGSGKT)) interacts with ATP. Residue threonine 630 is modified to Phosphothreonine. Residues 633–688 (EEEEELNMVHPHSHQLHPNSHAPASQSNNQRAPASHHSGAVIHNNNNNNNKNGNAG) form a disordered region. A compositionally biased stretch (polar residues) spans 648–664 (LHPNSHAPASQSNNQRA). A compositionally biased stretch (low complexity) spans 676 to 688 (NNNNNNNKNGNAG). Phosphoserine is present on residues serine 795, serine 797, and serine 800.

The protein belongs to the TRAFAC class myosin-kinesin ATPase superfamily. Kinesin family. MCAK/KIF2 subfamily. Interacts with Alms1a (via C-terminus). In terms of tissue distribution, expressed in male germline stem cells and spermatogonia (at protein level).

The protein resides in the cytoplasm. The protein localises to the cytoskeleton. It localises to the microtubule organizing center. Its subcellular location is the centrosome. It is found in the spindle pole. The protein resides in the chromosome. The protein localises to the centromere. In terms of biological role, required during anaphase to drive sister chromatid separation to promote flux by actively depolymerizing kinetochore microtubules at their pole-associated minus ends, thereby moving chromatids through a 'poleward flux'. Involved in asymmetric cell division of sensory organ precursor (SOP) cells by playing a role in the asymmetric localization of Sara-expressing endosomes to the pIIa daughter cell but not to the pIIb cell. Klp98A targets Sara-expressing endosomes to the central spindle which is symmetrically arranged in early cell division. During late cytokinesis, central spindle asymmetry is generated by enrichment of Patronin on the pIIb side which protects microtubules from depolymerization by Klp10A while unprotected microtubules on the pIIa side are disassembled by Klp10A, leading to the asymmetric delivery of Sara-expressing endosomes to the pIIa daughter cell. The sequence is that of Kinesin-like protein Klp10A from Drosophila melanogaster (Fruit fly).